Reading from the N-terminus, the 947-residue chain is Translation initiation factor IF-2 (947 aa).

Residues 55–361 are disordered; sequence TKDAQAGSAK…PVTERKFHEL (307 aa). Residues 63–73 show a composition bias toward basic and acidic residues; sequence AKDKQVAEQKA. Residues 76–90 show a composition bias toward low complexity; sequence AKATTPQPAAATQEA. Composition is skewed to basic and acidic residues over residues 103–116, 125–134, and 170–183; these read FKAEREARAKEQAA, SNDRKSDYRQ, and NDGHRQAGNRDKNR. The span at 190 to 204 shows a compositional bias: low complexity; that stretch reads RQQDTGRQGQTQAGA. Basic and acidic residues-rich tracts occupy residues 225–249, 257–267, and 294–311; these read ARQRESRFREQEEAKRLEQQARQEA, QTEDKKHREAS, and NRPDKGHDRDHGLEDGQK. A compositionally biased stretch (low complexity) spans 316-334; sequence SWNSQNQVRNQKNSNWNNN. The segment covering 335-345 has biased composition (basic residues); that stretch reads KKNKKGKHHKN. The 170-residue stretch at 448 to 617 folds into the tr-type G domain; the sequence is ERAPVVTIMG…LLVAEVEELK (170 aa). The interval 457-464 is G1; the sequence is GHVDHGKT. Residue 457 to 464 coordinates GTP; sequence GHVDHGKT. The interval 482–486 is G2; the sequence is GITQH. Positions 503-506 are G3; that stretch reads DTPG. GTP-binding positions include 503–507 and 557–560; these read DTPGH and NKID. The segment at 557-560 is G4; it reads NKID. The G5 stretch occupies residues 593–595; sequence SAK.

Belongs to the TRAFAC class translation factor GTPase superfamily. Classic translation factor GTPase family. IF-2 subfamily.

The protein localises to the cytoplasm. Its function is as follows. One of the essential components for the initiation of protein synthesis. Protects formylmethionyl-tRNA from spontaneous hydrolysis and promotes its binding to the 30S ribosomal subunits. Also involved in the hydrolysis of GTP during the formation of the 70S ribosomal complex. In Streptococcus equi subsp. zooepidemicus (strain MGCS10565), this protein is Translation initiation factor IF-2.